An 89-amino-acid polypeptide reads, in one-letter code: Small ribosomal subunit protein uS15 (89 aa).

Belongs to the universal ribosomal protein uS15 family. In terms of assembly, part of the 30S ribosomal subunit. Forms a bridge to the 50S subunit in the 70S ribosome, contacting the 23S rRNA.

Functionally, one of the primary rRNA binding proteins, it binds directly to 16S rRNA where it helps nucleate assembly of the platform of the 30S subunit by binding and bridging several RNA helices of the 16S rRNA. Forms an intersubunit bridge (bridge B4) with the 23S rRNA of the 50S subunit in the ribosome. This is Small ribosomal subunit protein uS15 from Mycolicibacterium vanbaalenii (strain DSM 7251 / JCM 13017 / BCRC 16820 / KCTC 9966 / NRRL B-24157 / PYR-1) (Mycobacterium vanbaalenii).